Reading from the N-terminus, the 220-residue chain is MAGDPLLPALHTGVERLGLTLPEGAAEALITYLRLLERWNRAYNLSAIRDPGEMLHRHLLDSLSILPYVEGDSLLDVGSGAGLPGIPLALARPGLTVTLLDSNGKKQRFTRQVALELGLHRLRFAQARLADYRPGQPFDTVVSRAFAALSGYVPEALRLCRAGGRVLAMKGRLPEEELAALPRSLRGCTLTALDVPGVAGQRHLLTWTAPAVSATEEANP.

Positions 78, 83, and 144 each coordinate S-adenosyl-L-methionine.

This sequence belongs to the methyltransferase superfamily. RNA methyltransferase RsmG family.

The protein localises to the cytoplasm. It carries out the reaction guanosine(527) in 16S rRNA + S-adenosyl-L-methionine = N(7)-methylguanosine(527) in 16S rRNA + S-adenosyl-L-homocysteine. In terms of biological role, specifically methylates the N7 position of guanine in position 527 of 16S rRNA. This is Ribosomal RNA small subunit methyltransferase G from Alkalilimnicola ehrlichii (strain ATCC BAA-1101 / DSM 17681 / MLHE-1).